Reading from the N-terminus, the 1002-residue chain is MKLLLLLLLLLLLHISHSFTVAKPITELHALLSLKSSFTIDEHSPLLTSWNLSTTFCSWTGVTCDVSLRHVTSLDLSGLNLSGTLSSDVAHLPLLQNLSLAANQISGPIPPQISNLYELRHLNLSNNVFNGSFPDELSSGLVNLRVLDLYNNNLTGDLPVSLTNLTQLRHLHLGGNYFSGKIPATYGTWPVLEYLAVSGNELTGKIPPEIGNLTTLRELYIGYYNAFENGLPPEIGNLSELVRFDAANCGLTGEIPPEIGKLQKLDTLFLQVNAFTGTITQELGLISSLKSMDLSNNMFTGEIPTSFSQLKNLTLLNLFRNKLYGAIPEFIGEMPELEVLQLWENNFTGSIPQKLGENGRLVILDLSSNKLTGTLPPNMCSGNRLMTLITLGNFLFGSIPDSLGKCESLTRIRMGENFLNGSIPKELFGLPKLSQVELQDNYLTGELPISGGGVSGDLGQISLSNNQLSGSLPAAIGNLSGVQKLLLDGNKFSGSIPPEIGRLQQLSKLDFSHNLFSGRIAPEISRCKLLTFVDLSRNELSGDIPNELTGMKILNYLNLSRNHLVGSIPVTIASMQSLTSVDFSYNNLSGLVPSTGQFSYFNYTSFVGNSHLCGPYLGPCGKGTHQSHVKPLSATTKLLLVLGLLFCSMVFAIVAIIKARSLRNASEAKAWRLTAFQRLDFTCDDVLDSLKEDNIIGKGGAGIVYKGTMPKGDLVAVKRLATMSHGSSHDHGFNAEIQTLGRIRHRHIVRLLGFCSNHETNLLVYEYMPNGSLGEVLHGKKGGHLHWNTRYKIALEAAKGLCYLHHDCSPLIVHRDVKSNNILLDSNFEAHVADFGLAKFLQDSGTSECMSAIAGSYGYIAPEYAYTLKVDEKSDVYSFGVVLLELITGKKPVGEFGDGVDIVQWVRSMTDSNKDCVLKVIDLRLSSVPVHEVTHVFYVALLCVEEQAVERPTMREVVQILTEIPKIPLSKQQAAESDVTEKAPAINESSPDSGSPPDLLSN.

The N-terminal stretch at 1-22 (MKLLLLLLLLLLLHISHSFTVA) is a signal peptide. The Extracellular portion of the chain corresponds to 23–636 (KPITELHALL…SHVKPLSATT (614 aa)). Asn51, Asn80, Asn97, Asn123, Asn130, Asn153, and Asn164 each carry an N-linked (GlcNAc...) asparagine glycan. LRR repeat units lie at residues 68-92 (LRHV…VAHL), 93-116 (PLLQ…ISNL), 118-140 (ELRH…LSSG), 141-165 (LVNL…LTNL), 167-188 (QLRH…TYGT), 189-213 (WPVL…IGNL), 215-238 (TLRE…IGNL), 239-262 (SELV…IGKL), 263-285 (QKLD…ELGL), 286-309 (ISSL…SFSQ), 311-334 (KNLT…IGEM), 335-358 (PELE…LGEN), 359-382 (GRLV…MCSG), 384-406 (RLMT…LGKC), 407-430 (ESLT…LFGL), 431-456 (PKLS…GVSG), 458-479 (LGQI…IGNL), 480-503 (SGVQ…IGRL), 505-527 (QLSK…ISRC), 528-551 (KLLT…LTGM), 552-575 (KILN…IASM), and 577-600 (SLTS…QFSY). N-linked (GlcNAc...) asparagine glycans are attached at residues Asn212 and Asn237. Residues Asn312 and Asn346 are each glycosylated (N-linked (GlcNAc...) asparagine). Asn420 carries N-linked (GlcNAc...) asparagine glycosylation. Asn478 is a glycosylation site (N-linked (GlcNAc...) asparagine). N-linked (GlcNAc...) asparagine glycosylation is found at Asn558, Asn587, and Asn602. Residues 637–657 (KLLLVLGLLFCSMVFAIVAII) form a helical membrane-spanning segment. Topologically, residues 658–1002 (KARSLRNASE…SGSPPDLLSN (345 aa)) are cytoplasmic. Phosphothreonine is present on Thr682. Residues 690 to 967 (LKEDNIIGKG…VQILTEIPKI (278 aa)) form the Protein kinase domain. Residues 696-704 (IGKGGAGIV) and Lys718 each bind ATP. Tyr765 and Tyr803 each carry phosphotyrosine. Asp816 functions as the Proton acceptor in the catalytic mechanism. Residue Ser851 is modified to Phosphoserine. Residues Tyr859 and Tyr866 each carry the phosphotyrosine modification. Phosphothreonine is present on Thr867. A disordered region spans residues 969-1002 (LSKQQAAESDVTEKAPAINESSPDSGSPPDLLSN). Residues 989 to 1002 (SSPDSGSPPDLLSN) show a composition bias toward low complexity.

It belongs to the protein kinase superfamily. Ser/Thr protein kinase family. Interacts with BAM1 and CLV1. Binds to the CLV3, CLE11, CLE18, CLE19, CLE22, CLE25, CLE26, CLE40, CLE41 and CLE42 mature peptides, probably via its extracellular leucine-rich repeat region. In terms of tissue distribution, expressed in seedlings, roots, rosette leaves, stems, inflorescences, flowers and siliques.

The protein resides in the cell membrane. It carries out the reaction L-seryl-[protein] + ATP = O-phospho-L-seryl-[protein] + ADP + H(+). It catalyses the reaction L-threonyl-[protein] + ATP = O-phospho-L-threonyl-[protein] + ADP + H(+). In terms of biological role, necessary for male gametophyte development, as well as ovule specification and function. Involved in cell-cell communication process required during early anther development, and regulating cell division and differentiation to organize cell layers. Required for the development of high-ordered vascular strands within the leaf and a correlated control of leaf shape, size and symmetry. May regulate the CLV1-dependent CLV3-mediated signaling in meristems maintenance. In Arabidopsis thaliana (Mouse-ear cress), this protein is Leucine-rich repeat receptor-like serine/threonine-protein kinase BAM2 (BAM2).